The primary structure comprises 424 residues: Enolase (424 aa).

Residue Q165 coordinates (2R)-2-phosphoglycerate. E207 serves as the catalytic Proton donor. Mg(2+) is bound by residues D244, E283, and D310. The (2R)-2-phosphoglycerate site is built by K335, R364, S365, and K386. The Proton acceptor role is filled by K335.

It belongs to the enolase family. It depends on Mg(2+) as a cofactor.

It localises to the cytoplasm. The protein resides in the secreted. The protein localises to the cell surface. The enzyme catalyses (2R)-2-phosphoglycerate = phosphoenolpyruvate + H2O. Its pathway is carbohydrate degradation; glycolysis; pyruvate from D-glyceraldehyde 3-phosphate: step 4/5. In terms of biological role, catalyzes the reversible conversion of 2-phosphoglycerate (2-PG) into phosphoenolpyruvate (PEP). It is essential for the degradation of carbohydrates via glycolysis. The sequence is that of Enolase from Chlamydia abortus (strain DSM 27085 / S26/3) (Chlamydophila abortus).